Consider the following 219-residue polypeptide: 7-cyano-7-deazaguanine synthase (219 aa).

An ATP-binding site is contributed by 10–20 (FSGGQDSTTCL). Zn(2+)-binding residues include Cys188, Cys196, Cys199, and Cys202.

Belongs to the QueC family. The cofactor is Zn(2+).

The catalysed reaction is 7-carboxy-7-deazaguanine + NH4(+) + ATP = 7-cyano-7-deazaguanine + ADP + phosphate + H2O + H(+). It participates in purine metabolism; 7-cyano-7-deazaguanine biosynthesis. In terms of biological role, catalyzes the ATP-dependent conversion of 7-carboxy-7-deazaguanine (CDG) to 7-cyano-7-deazaguanine (preQ(0)). The polypeptide is 7-cyano-7-deazaguanine synthase (Neisseria meningitidis serogroup B (strain ATCC BAA-335 / MC58)).